The chain runs to 243 residues: Type III pantothenate kinase (243 aa).

Position 7–14 (7–14 (DIGNTRLK)) interacts with ATP. Residues Tyr95 and 102-105 (GIDR) each bind substrate. Residue Asp104 is the Proton acceptor of the active site. Thr126 provides a ligand contact to ATP. Substrate is bound at residue Thr177.

It belongs to the type III pantothenate kinase family. As to quaternary structure, homodimer. It depends on NH4(+) as a cofactor. K(+) serves as cofactor.

The protein localises to the cytoplasm. The catalysed reaction is (R)-pantothenate + ATP = (R)-4'-phosphopantothenate + ADP + H(+). It functions in the pathway cofactor biosynthesis; coenzyme A biosynthesis; CoA from (R)-pantothenate: step 1/5. Catalyzes the phosphorylation of pantothenate (Pan), the first step in CoA biosynthesis. This chain is Type III pantothenate kinase, found in Acinetobacter baylyi (strain ATCC 33305 / BD413 / ADP1).